Consider the following 585-residue polypeptide: Dihydroxy-acid dehydratase, mitochondrial (585 aa).

The N-terminal 20 residues, 1-20, are a transit peptide targeting the mitochondrion; the sequence is MGLLTKVATSRQFSTTRCVA. [2Fe-2S] cluster is bound at residue C70. D102 contacts Mg(2+). C143 lines the [2Fe-2S] cluster pocket. D144 serves as a coordination point for Mg(2+). C221 is a [2Fe-2S] cluster binding site. E474 is a Mg(2+) binding site. The active-site Proton acceptor is the S500.

It belongs to the IlvD/Edd family. [2Fe-2S] cluster serves as cofactor. Mg(2+) is required as a cofactor.

It is found in the mitochondrion. The enzyme catalyses (2R)-2,3-dihydroxy-3-methylbutanoate = 3-methyl-2-oxobutanoate + H2O. It catalyses the reaction (2R,3R)-2,3-dihydroxy-3-methylpentanoate = (S)-3-methyl-2-oxopentanoate + H2O. It functions in the pathway amino-acid biosynthesis; L-isoleucine biosynthesis; L-isoleucine from 2-oxobutanoate: step 3/4. The protein operates within amino-acid biosynthesis; L-valine biosynthesis; L-valine from pyruvate: step 3/4. Catalytic activity is inactivated under iron-limiting conditions. In terms of biological role, dihydroxyacid dehydratase that catalyzes the third step in the common pathway leading to biosynthesis of branched-chain amino acids. Catalyzes the dehydration of (2R,3R)-2,3-dihydroxy-3-methylpentanoate (2,3-dihydroxy-3-methylvalerate) into 2-oxo-3-methylpentanoate (2-oxo-3-methylvalerate) and of (2R)-2,3-dihydroxy-3-methylbutanoate (2,3-dihydroxyisovalerate) into 2-oxo-3-methylbutanoate (2-oxoisovalerate), the penultimate precursor to L-isoleucine and L-valine, respectively. Required for the synthesis of alpha-isopropylmalate which modulates the activity of LEU3 and subsequently regulates the expression of LEU1. This Saccharomyces cerevisiae (strain ATCC 204508 / S288c) (Baker's yeast) protein is Dihydroxy-acid dehydratase, mitochondrial.